We begin with the raw amino-acid sequence, 84 residues long: Small, acid-soluble spore protein gamma-type (84 aa).

2 stretches are compositionally biased toward polar residues: residues 1–25 (MANSNNFSKTNAQQVRKQNQQSAAG) and 34–44 (ASETNAQQVRK). The segment at 1-84 (MANSNNFSKT…SAEQNKQQNS (84 aa)) is disordered. Repeats lie at residues 21 to 47 (QSAAGQGQFGTEFASETNAQQVRKQNQ) and 48 to 74 (QSAGQQGQFGTEFASETDAQQVRQQNQ). Composition is skewed to low complexity over residues 45 to 57 (QNQQSAGQQGQFG) and 71 to 84 (QQNQSAEQNKQQNS).

This sequence belongs to the gamma-type SASP family.

Its function is as follows. SASP are proteins degraded in the first minutes of spore germination and provide amino acids for both new protein synthesis and metabolism. These proteins may be involved in dormant spore's high resistance to UV light. The protein is Small, acid-soluble spore protein gamma-type (sspE) of Bacillus subtilis (strain 168).